The chain runs to 805 residues: 1,4-alpha-glucan-branching enzyme 2-2, chloroplastic/amyloplastic (805 aa).

A chloroplast-targeting transit peptide spans 1-32; it reads MVVIHGVSLTPRFTLPSRPLNTGFNAGNSTLS. Asp451 acts as the Nucleophile in catalysis. Glu506 serves as the catalytic Proton donor.

The protein belongs to the glycosyl hydrolase 13 family. GlgB subfamily. Monomer. As to expression, expressed in seedlings, roots, stems, leaves, inflorescences, seeds and flowers.

It is found in the plastid. The protein resides in the chloroplast stroma. It localises to the amyloplast. It catalyses the reaction Transfers a segment of a (1-&gt;4)-alpha-D-glucan chain to a primary hydroxy group in a similar glucan chain.. Its pathway is glycan biosynthesis; starch biosynthesis. Functionally, catalyzes the formation of the alpha-1,6-glucosidic linkages in starch by scission of a 1,4-alpha-linked oligosaccharide from growing alpha-1,4-glucan chains and the subsequent attachment of the oligosaccharide to the alpha-1,6 position. This is 1,4-alpha-glucan-branching enzyme 2-2, chloroplastic/amyloplastic (SBE2.2) from Arabidopsis thaliana (Mouse-ear cress).